The following is a 198-amino-acid chain: NAD(P)H dehydrogenase (quinone) (198 aa).

One can recognise a Flavodoxin-like domain in the interval 4–189 (ILVLYYSMYG…SIARYQGEYV (186 aa)). FMN is bound by residues 10 to 15 (SMYGHI) and 78 to 80 (TRF). Tyr12 provides a ligand contact to NAD(+). Trp98 provides a ligand contact to substrate. FMN is bound by residues 113–118 (STGTGG) and His133.

This sequence belongs to the WrbA family. It depends on FMN as a cofactor.

The enzyme catalyses a quinone + NADH + H(+) = a quinol + NAD(+). It carries out the reaction a quinone + NADPH + H(+) = a quinol + NADP(+). The protein is NAD(P)H dehydrogenase (quinone) of Citrobacter koseri (strain ATCC BAA-895 / CDC 4225-83 / SGSC4696).